Consider the following 245-residue polypeptide: Glycerophosphodiester phosphodiesterase (245 aa).

The GP-PDE domain maps to 2 to 241 (TKIFAHRGFK…DFPDRAVKIR (240 aa)). The Proton acceptor role is filled by His7. Residues Glu34 and Asp36 each contribute to the a divalent metal cation site. The Proton donor role is filled by His49. An a divalent metal cation-binding site is contributed by Glu110.

The protein belongs to the glycerophosphoryl diester phosphodiesterase family. Ni(2+) serves as cofactor. It depends on Co(2+) as a cofactor. The cofactor is Mn(2+).

The catalysed reaction is a sn-glycero-3-phosphodiester + H2O = an alcohol + sn-glycerol 3-phosphate + H(+). With respect to regulation, inhibited by EDTA and various organic solvents such as chloroform, toluene or benzene. In terms of biological role, glycerophosphodiester phosphodiesterase hydrolyzes glycerophosphodiesters into glycerol-3-phosphate (G3P) and the corresponding alcohol. Can hydrolyze the model substrate bis-(p-nitrophenyl phosphate) (bis(pNPP)) to p-nitrophenol. Can also catalyze the degradation of diphenyl phosphate (DPHP) to phenyl phosphate (PHP). DPHP is an aryl phosphate ester used as a chemical additive and an industrial catalyst that can easily spread to the environment and exhibits toxicity toward organisms. In Bacillus altitudinis, this protein is Glycerophosphodiester phosphodiesterase.